The following is a 403-amino-acid chain: Heptahelical transmembrane protein ADIPOR3 (403 aa).

The Cytoplasmic segment spans residues 1-73 (MAAAAGEEVE…LSAFSIHNET (73 aa)). The helical transmembrane segment at 74–94 (LNVWTHLIGFFIFLVLTIYTA) threads the bilayer. The Extracellular segment spans residues 95 to 209 (TQVPNVVDLQ…QLIRPIPRWP (115 aa)). Residues 210–230 (FYAFLGGAMFCLLASSTCHLL) form a helical membrane-spanning segment. Topologically, residues 231–246 (SCHSRRLAYIMLRLDY) are cytoplasmic. Residues 247–267 (AGIAALIATSFYPPVYYSFMC) traverse the membrane as a helical segment. Residues 268 to 274 (YPFFCNL) lie on the Extracellular side of the membrane. Residues 275–295 (YLSCITILGVATIAFSLLPVF) traverse the membrane as a helical segment. Residues 296-306 (QNPEFRTIRAC) are Cytoplasmic-facing. A helical membrane pass occupies residues 307–327 (LFFGMGASGVIPVIHKLILFW). The Extracellular portion of the chain corresponds to 328 to 331 (HQPE). A helical membrane pass occupies residues 332-352 (ALHTTAYEVLMGLFYGIGALV). Topologically, residues 353–374 (YATRVPERWMPGKFDIAGHSHQ) are cytoplasmic. The chain crosses the membrane as a helical span at residues 375–395 (LFHVLVVAGAYTHYHSGLVYL). Topologically, residues 396–403 (KWRDVQGC) are extracellular.

Belongs to the ADIPOR family.

Its subcellular location is the membrane. In terms of biological role, may play a role in abiotic stress response. The sequence is that of Heptahelical transmembrane protein ADIPOR3 (ADIPOR3) from Oryza sativa subsp. japonica (Rice).